The chain runs to 492 residues: N-succinylglutamate 5-semialdehyde dehydrogenase (492 aa).

220 to 225 (GSASTG) contributes to the NAD(+) binding site. Residues Glu-243 and Cys-277 contribute to the active site.

This sequence belongs to the aldehyde dehydrogenase family. AstD subfamily.

It carries out the reaction N-succinyl-L-glutamate 5-semialdehyde + NAD(+) + H2O = N-succinyl-L-glutamate + NADH + 2 H(+). It participates in amino-acid degradation; L-arginine degradation via AST pathway; L-glutamate and succinate from L-arginine: step 4/5. Its function is as follows. Catalyzes the NAD-dependent reduction of succinylglutamate semialdehyde into succinylglutamate. The polypeptide is N-succinylglutamate 5-semialdehyde dehydrogenase (Salmonella dublin (strain CT_02021853)).